A 361-amino-acid chain; its full sequence is dTDP-glucose 4,6-dehydratase (361 aa).

NAD(+) contacts are provided by residues F11–I12, D32–T35, D58–I59, L80–S84, and T99. S84 contacts substrate. T133 lines the substrate pocket. The active-site Proton donor is D134. Residues E135 and Y167 each act as proton acceptor in the active site. Y167 to K171 serves as a coordination point for NAD(+). Residue N196 participates in substrate binding. N197 contributes to the NAD(+) binding site. Residues K206 to L207, P222 to Y224, R231, N266, and D296 to H300 contribute to the substrate site.

It belongs to the NAD(P)-dependent epimerase/dehydratase family. dTDP-glucose dehydratase subfamily. Homodimer. NAD(+) is required as a cofactor.

The enzyme catalyses dTDP-alpha-D-glucose = dTDP-4-dehydro-6-deoxy-alpha-D-glucose + H2O. It participates in carbohydrate biosynthesis; dTDP-L-rhamnose biosynthesis. The protein operates within bacterial outer membrane biogenesis; LPS O-antigen biosynthesis. In terms of biological role, catalyzes the dehydration of dTDP-D-glucose to form dTDP-6-deoxy-D-xylo-4-hexulose via a three-step process involving oxidation, dehydration and reduction. In Shigella flexneri, this protein is dTDP-glucose 4,6-dehydratase (rfbB).